We begin with the raw amino-acid sequence, 60 residues long: Light-harvesting protein B-800/850 alpha chain (60 aa).

At 1-14 the chain is on the cytoplasmic side; sequence MNNAKIWTVVKPST. The helical transmembrane segment at 15–35 threads the bilayer; it reads GIPLILGAVAVAALIVHAGLL. Position 31 (H31) interacts with a bacteriochlorophyll. Topologically, residues 36–60 are periplasmic; that stretch reads TNTTWFANYWNGNPMATVVAVAPAQ.

The protein belongs to the antenna complex alpha subunit family. In terms of assembly, the core complex is formed by different alpha and beta chains, binding bacteriochlorophyll molecules, and arranged most probably in tetrameric structures disposed around the reaction center. The non-pigmented gamma chains may constitute additional components.

It is found in the cell inner membrane. In terms of biological role, antenna complexes are light-harvesting systems, which transfer the excitation energy to the reaction centers. The protein is Light-harvesting protein B-800/850 alpha chain (pucA) of Rhodobacter capsulatus (Rhodopseudomonas capsulata).